The following is a 587-amino-acid chain: Aspartate--tRNA ligase (587 aa).

Glutamate 174 lines the L-aspartate pocket. The segment at 198-201 is aspartate; that stretch reads QTFK. Arginine 220 is an L-aspartate binding site. ATP is bound by residues 220–222 and glutamine 229; that span reads RDE. Histidine 447 lines the L-aspartate pocket. Glutamate 481 is an ATP binding site. Arginine 488 contributes to the L-aspartate binding site. 533-536 provides a ligand contact to ATP; the sequence is GLDR.

The protein belongs to the class-II aminoacyl-tRNA synthetase family. Type 1 subfamily. In terms of assembly, homodimer.

The protein localises to the cytoplasm. The enzyme catalyses tRNA(Asp) + L-aspartate + ATP = L-aspartyl-tRNA(Asp) + AMP + diphosphate. Its function is as follows. Catalyzes the attachment of L-aspartate to tRNA(Asp) in a two-step reaction: L-aspartate is first activated by ATP to form Asp-AMP and then transferred to the acceptor end of tRNA(Asp). This is Aspartate--tRNA ligase from Porphyromonas gingivalis (strain ATCC BAA-308 / W83).